The primary structure comprises 414 residues: Ferredoxin--NAD(P)(+) reductase fdr (414 aa).

Residue 7–38 (DVVIVGAGHGGAQTAIALRQNGFAGTIAIIGA) participates in FAD binding. Residue 149-177 (KVVIIGGGYIGLEAAAVMAKFGKNVTLIE) participates in NAD(+) binding.

This sequence belongs to the FAD-dependent oxidoreductase family. In terms of assembly, monomer. Carbazole 1,9a-dioxygenase complex consists of a terminal oxygenase component CarAa, a ferredoxin reductase component fdr and a ferredoxin component CarAc. FAD serves as cofactor.

It catalyses the reaction 2 reduced [2Fe-2S]-[ferredoxin] + NAD(+) + H(+) = 2 oxidized [2Fe-2S]-[ferredoxin] + NADH. It carries out the reaction 2 reduced [2Fe-2S]-[ferredoxin] + NADP(+) + H(+) = 2 oxidized [2Fe-2S]-[ferredoxin] + NADPH. Its function is as follows. Part of the multicomponent carbazole 1,9a-dioxygenase (CARDO), that converts carbazole (CAR) into 2-aminobiphenyl-2,3-diol. This chain is Ferredoxin--NAD(P)(+) reductase fdr (fdr), found in Sphingomonas sp.